Here is a 166-residue protein sequence, read N- to C-terminus: 2S seed storage protein 4 (166 aa).

The first 21 residues, 1 to 21, serve as a signal peptide directing secretion; the sequence is MANKLFLVCAALALCFILTNA. 2 consecutive propeptides follow at residues 22-37 and 73-88; these read SVYR…DASN and GPSL…DIEN.

This sequence belongs to the 2S seed storage albumins family. As to quaternary structure, the mature protein consists of a small and a large chain linked by disulfide bonds.

Its function is as follows. This is a 2S seed storage protein. This chain is 2S seed storage protein 4 (AT2S4), found in Arabidopsis thaliana (Mouse-ear cress).